The chain runs to 116 residues: Large ribosomal subunit protein bL20 (116 aa).

It belongs to the bacterial ribosomal protein bL20 family.

Its function is as follows. Binds directly to 23S ribosomal RNA and is necessary for the in vitro assembly process of the 50S ribosomal subunit. It is not involved in the protein synthesizing functions of that subunit. The chain is Large ribosomal subunit protein bL20 from Nautilia profundicola (strain ATCC BAA-1463 / DSM 18972 / AmH).